The sequence spans 551 residues: RCC1 and BTB domain-containing protein 2 (551 aa).

RCC1 repeat units lie at residues 64-115 (NDEI…VLAT), 117-169 (DGEV…VLTS), 171-222 (GEVF…AVVD), 223-274 (TGEV…VLTD), 276-326 (GQIY…AAKT), and 328-382 (GGHV…TVAE). The BTB domain occupies 394–457 (ADLKFLVDGK…LYTDNISLSP (64 aa)).

As to expression, expressed in testis and heart (at protein level).

The protein resides in the cytoplasmic vesicle. Its subcellular location is the secretory vesicle. It localises to the acrosome. The polypeptide is RCC1 and BTB domain-containing protein 2 (Rcbtb2) (Mus musculus (Mouse)).